The following is a 178-amino-acid chain: Inorganic pyrophosphatase (178 aa).

Substrate contacts are provided by K30, R44, and Y56. D66, D71, and D103 together coordinate Mg(2+). Substrate is bound at residue Y140.

Belongs to the PPase family. Homohexamer. The cofactor is Mg(2+).

The protein localises to the cytoplasm. It carries out the reaction diphosphate + H2O = 2 phosphate + H(+). Catalyzes the hydrolysis of inorganic pyrophosphate (PPi) forming two phosphate ions. This is Inorganic pyrophosphatase from Thermococcus kodakarensis (strain ATCC BAA-918 / JCM 12380 / KOD1) (Pyrococcus kodakaraensis (strain KOD1)).